The chain runs to 37 residues: Large ribosomal subunit protein bL36 (37 aa).

Belongs to the bacterial ribosomal protein bL36 family.

The chain is Large ribosomal subunit protein bL36 from Variovorax paradoxus (strain S110).